A 137-amino-acid polypeptide reads, in one-letter code: Large-conductance mechanosensitive channel (137 aa).

The next 3 helical transmembrane spans lie at 15–35 (IDLA…NSIV), 38–58 (IFMP…MFIQ), and 80–100 (GNFI…FLFV).

It belongs to the MscL family. As to quaternary structure, homopentamer.

It is found in the cell inner membrane. Channel that opens in response to stretch forces in the membrane lipid bilayer. May participate in the regulation of osmotic pressure changes within the cell. This is Large-conductance mechanosensitive channel from Bartonella henselae (strain ATCC 49882 / DSM 28221 / CCUG 30454 / Houston 1) (Rochalimaea henselae).